Consider the following 526-residue polypeptide: Delayed-rectifier potassium channel regulatory subunit KCNS1 (526 aa).

Residues 1–217 (MLMLLVRGTH…LTMENPGYSL (217 aa)) lie on the Cytoplasmic side of the membrane. The helical transmembrane segment at 218-239 (PSKLFSCVSISVVLASIAAMCI) threads the bilayer. Over 240-270 (HSLPEYQAREAAAAVAAVAAGRSPEGVRDDP) the chain is Extracellular. Residues 271–293 (VLRRLEYFCIAWFSFEVSSRLLL) traverse the membrane as a helical segment. Residues 294 to 304 (APSTRNFFCHP) lie on the Cytoplasmic side of the membrane. Residues 305–322 (LNLIDIVSVLPFYLTLLA) form a helical membrane-spanning segment. Residues 323–337 (GVALGDQGGKEFGHL) are Extracellular-facing. A helical; Voltage-sensor membrane pass occupies residues 338 to 358 (GKVVQVFRLMRIFRVLKLARH). Residues 359-373 (STGLRSLGATLKHSY) lie on the Cytoplasmic side of the membrane. The chain crosses the membrane as a helical span at residues 374 to 395 (REVGILLLYLAVGVSVFSGVAY). The Extracellular segment spans residues 396–408 (TAEKEEDVGFNTI). Positions 409 to 420 (PACWWWGTVSMT) form an intramembrane region, helical. A Selectivity filter motif is present at residues 421–426 (TVGYGD). Residues 421 to 428 (TVGYGDVV) lie within the membrane without spanning it. Residues 429-435 (PVTVAGK) lie on the Extracellular side of the membrane. Residues 436 to 464 (LAASGCILGGILVVALPITIIFNKFSHFY) form a helical membrane-spanning segment. Residues 465–526 (RRQKALEAAV…PSEPPHPQRY (62 aa)) are Cytoplasmic-facing. Positions 492–526 (VSEASLETSGETSQEGRSADLESQAPSEPPHPQRY) are disordered. Positions 496–507 (SLETSGETSQEG) are enriched in polar residues.

Belongs to the potassium channel family. S (TC 1.A.1.2) subfamily. Kv9.1/KCNS1 sub-subfamily. In terms of assembly, heterotetramer with KCNB1. Heterotetramer with KCNB2. Does not form homomultimers.

It localises to the cell membrane. Potassium channel regulatory subunit that modulate the delayed rectifier voltage-gated potassium channel activity of KCNB1 and KCNB2 by altering their kinetics, expression levels, and shifting the half-inactivation potential to more polarized values. While it does not form functional channels on its own, it can form functional heterotetrameric channels with KCNB1 and KCNB2. Each regulatory subunit has unique regulatory properties that can lead to extensive inhibition, significant changes in kinetics, and/or substantial shifts in the voltage dependencies of the inactivation process. The polypeptide is Delayed-rectifier potassium channel regulatory subunit KCNS1 (Gorilla gorilla gorilla (Western lowland gorilla)).